A 196-amino-acid chain; its full sequence is DnaA initiator-associating protein DiaA (196 aa).

The 163-residue stretch at 34-196 (LVQSLLNGNK…DNTLFPHQDD (163 aa)) folds into the SIS domain.

Belongs to the SIS family. DiaA subfamily. As to quaternary structure, homotetramer; dimer of dimers.

Its function is as follows. Required for the timely initiation of chromosomal replication via direct interactions with the DnaA initiator protein. This is DnaA initiator-associating protein DiaA from Shigella boydii serotype 18 (strain CDC 3083-94 / BS512).